Reading from the N-terminus, the 299-residue chain is Mimecan (299 aa).

The signal sequence occupies residues 1–19 (MKTLQSTLLLFLFVPLIKP). Asparagine 89 is a glycosylation site (N-linked (GlcNAc...) (keratan sulfate) asparagine). LRR repeat units lie at residues 113–132 (DAVPPLPKESAYLYARFNKI), 133–156 (KKLTAKDFADIPNLRRLDFTGNLI), 157–180 (EDIEDGTFSKLSLLEELTLAENQL), 181–200 (LKLPVLPPKLTLFNAKYNKI), 201–226 (KSRGIKANTFKKLHNLSFLYLDHNAL), 227–247 (ESVPLNLPESLRVIHLQFNNI), and 248–278 (TSITDDTFCKANDTSYIRDRIEEIRLEGNPV). A glycan (N-linked (GlcNAc...) (keratan sulfate) asparagine) is linked at asparagine 215. An N-linked (GlcNAc...) asparagine glycan is attached at asparagine 246. Cysteine 256 and cysteine 289 are oxidised to a cystine. An N-linked (GlcNAc...) (keratan sulfate) asparagine glycan is attached at asparagine 259.

This sequence belongs to the small leucine-rich proteoglycan (SLRP) family. SLRP class III subfamily. Contains keratan sulfate. Keratan sulfate attachment is observed in the cornea but the protein also exists in other tissues without keratan sulfate. In terms of processing, the 12 kDa OIF in bone and the 25 kDa KSPG25 protein in cornea are probably proteolytic fragments. As to expression, bone and cornea.

Its subcellular location is the secreted. It localises to the extracellular space. The protein resides in the extracellular matrix. Its function is as follows. Induces bone formation in conjunction with TGF-beta-1 or TGF-beta-2. This chain is Mimecan (OGN), found in Bos taurus (Bovine).